Here is a 553-residue protein sequence, read N- to C-terminus: Probable malate:quinone oxidoreductase (553 aa).

The segment covering 534–543 has biased composition (low complexity); it reads QLKPQVQPQP. Positions 534–553 are disordered; that stretch reads QLKPQVQPQPAHKAVADIAL.

This sequence belongs to the MQO family. FAD serves as cofactor.

The catalysed reaction is (S)-malate + a quinone = a quinol + oxaloacetate. Its pathway is carbohydrate metabolism; tricarboxylic acid cycle; oxaloacetate from (S)-malate (quinone route): step 1/1. The protein is Probable malate:quinone oxidoreductase of Citrobacter koseri (strain ATCC BAA-895 / CDC 4225-83 / SGSC4696).